Here is a 336-residue protein sequence, read N- to C-terminus: USG-1 protein homolog (336 aa).

This sequence belongs to the aspartate-semialdehyde dehydrogenase family.

This chain is USG-1 protein homolog (usg), found in Pseudomonas aeruginosa (strain ATCC 15692 / DSM 22644 / CIP 104116 / JCM 14847 / LMG 12228 / 1C / PRS 101 / PAO1).